The following is a 121-amino-acid chain: Large ribosomal subunit protein bL20 (121 aa).

The protein belongs to the bacterial ribosomal protein bL20 family.

Its function is as follows. Binds directly to 23S ribosomal RNA and is necessary for the in vitro assembly process of the 50S ribosomal subunit. It is not involved in the protein synthesizing functions of that subunit. The chain is Large ribosomal subunit protein bL20 from Wolbachia sp. subsp. Drosophila simulans (strain wRi).